A 187-amino-acid chain; its full sequence is Putative protein SSX8 (187 aa).

2 disordered regions span residues 1–21 and 109–187; these read MNGD…SEKR and PKIM…EDDE. The 64-residue stretch at 20–83 folds into the KRAB-related domain; the sequence is KRSKAFNDIA…KQATDFQGNY (64 aa). Position 123 is a phosphoserine (serine 123). Over residues 152-168 the composition is skewed to basic residues; it reads KRSGPKRGRHAWTHRLR.

Belongs to the SSX family. In terms of tissue distribution, not detected in any normal or tumor tissues.

Its function is as follows. Could act as a modulator of transcription. The chain is Putative protein SSX8 from Homo sapiens (Human).